Reading from the N-terminus, the 503-residue chain is Putative ribose/galactose/methyl galactoside import ATP-binding protein (503 aa).

2 ABC transporter domains span residues 7-244 (LEMI…VGRE) and 254-498 (VPIG…TGQL). Residue 39-46 (GENGAGKS) participates in ATP binding.

It belongs to the ABC transporter superfamily. Carbohydrate importer 2 (CUT2) (TC 3.A.1.2) family.

It localises to the cell membrane. It catalyses the reaction D-ribose(out) + ATP + H2O = D-ribose(in) + ADP + phosphate + H(+). It carries out the reaction D-galactose(out) + ATP + H2O = D-galactose(in) + ADP + phosphate + H(+). Part of an ABC transporter complex involved in carbohydrate import. Could be involved in ribose, galactose and/or methyl galactoside import. Responsible for energy coupling to the transport system. The chain is Putative ribose/galactose/methyl galactoside import ATP-binding protein from Geobacillus kaustophilus (strain HTA426).